The following is a 79-amino-acid chain: ATP synthase subunit c (79 aa).

Helical transmembrane passes span 10-30 (IAGA…IGVL) and 52-72 (FFIV…LAMY).

The protein belongs to the ATPase C chain family. As to quaternary structure, F-type ATPases have 2 components, F(1) - the catalytic core - and F(0) - the membrane proton channel. F(1) has five subunits: alpha(3), beta(3), gamma(1), delta(1), epsilon(1). F(0) has three main subunits: a(1), b(2) and c(10-14). The alpha and beta chains form an alternating ring which encloses part of the gamma chain. F(1) is attached to F(0) by a central stalk formed by the gamma and epsilon chains, while a peripheral stalk is formed by the delta and b chains.

It is found in the cell inner membrane. F(1)F(0) ATP synthase produces ATP from ADP in the presence of a proton or sodium gradient. F-type ATPases consist of two structural domains, F(1) containing the extramembraneous catalytic core and F(0) containing the membrane proton channel, linked together by a central stalk and a peripheral stalk. During catalysis, ATP synthesis in the catalytic domain of F(1) is coupled via a rotary mechanism of the central stalk subunits to proton translocation. Functionally, key component of the F(0) channel; it plays a direct role in translocation across the membrane. A homomeric c-ring of between 10-14 subunits forms the central stalk rotor element with the F(1) delta and epsilon subunits. This chain is ATP synthase subunit c, found in Thiobacillus denitrificans (strain ATCC 25259 / T1).